We begin with the raw amino-acid sequence, 56 residues long: Small ribosomal subunit protein uS14 (56 aa).

Belongs to the universal ribosomal protein uS14 family.

In Kluyveromyces lactis (strain ATCC 8585 / CBS 2359 / DSM 70799 / NBRC 1267 / NRRL Y-1140 / WM37) (Yeast), this protein is Small ribosomal subunit protein uS14 (RPS29).